A 382-amino-acid polypeptide reads, in one-letter code: Pyrimidine monooxygenase RutA (382 aa).

FMN-binding positions include 68 to 69, N134, E143, 159 to 160, and S209; these read IK and RY.

This sequence belongs to the NtaA/SnaA/DszA monooxygenase family. RutA subfamily.

It carries out the reaction uracil + FMNH2 + NADH + O2 = (Z)-3-ureidoacrylate + FMN + NAD(+) + H2O + H(+). The catalysed reaction is thymine + FMNH2 + NADH + O2 = (Z)-2-methylureidoacrylate + FMN + NAD(+) + H2O + H(+). Functionally, catalyzes the pyrimidine ring opening between N-3 and C-4 by an unusual flavin hydroperoxide-catalyzed mechanism, adding oxygen atoms in the process to yield ureidoacrylate peracid, that immediately reacts with FMN forming ureidoacrylate and FMN-N(5)-oxide. The FMN-N(5)-oxide reacts spontaneously with NADH to produce FMN. Requires the flavin reductase RutF to regenerate FMN in vivo. In Escherichia coli O55:H7 (strain CB9615 / EPEC), this protein is Pyrimidine monooxygenase RutA.